The following is a 211-amino-acid chain: Protein-L-isoaspartate O-methyltransferase (211 aa).

The active site involves serine 60.

The protein belongs to the methyltransferase superfamily. L-isoaspartyl/D-aspartyl protein methyltransferase family.

It is found in the cytoplasm. It carries out the reaction [protein]-L-isoaspartate + S-adenosyl-L-methionine = [protein]-L-isoaspartate alpha-methyl ester + S-adenosyl-L-homocysteine. In terms of biological role, catalyzes the methyl esterification of L-isoaspartyl residues in peptides and proteins that result from spontaneous decomposition of normal L-aspartyl and L-asparaginyl residues. It plays a role in the repair and/or degradation of damaged proteins. The sequence is that of Protein-L-isoaspartate O-methyltransferase from Pseudomonas syringae pv. tomato (strain ATCC BAA-871 / DC3000).